The sequence spans 227 residues: Cytochrome c oxidase subunit 2 (227 aa).

The Mitochondrial intermembrane portion of the chain corresponds to 1 to 14; sequence MAYPMQLGFQDATS. A helical membrane pass occupies residues 15-45; that stretch reads PIMEELLHFHDHTLMIVFLISSLVLYVISLM. Over 46–59 the chain is Mitochondrial matrix; the sequence is LTTKLTHTSTMDAQ. Residues 60–87 traverse the membrane as a helical segment; the sequence is EVETIWTILPAIILILIALPSLRILYMM. The Mitochondrial intermembrane portion of the chain corresponds to 88-227; sequence DEINNPSLTV…YFEKWSASML (140 aa). Cu cation contacts are provided by H161, C196, E198, C200, H204, and M207. Residue E198 participates in Mg(2+) binding. Y218 carries the post-translational modification Phosphotyrosine.

This sequence belongs to the cytochrome c oxidase subunit 2 family. Component of the cytochrome c oxidase (complex IV, CIV), a multisubunit enzyme composed of 14 subunits. The complex is composed of a catalytic core of 3 subunits MT-CO1, MT-CO2 and MT-CO3, encoded in the mitochondrial DNA, and 11 supernumerary subunits COX4I, COX5A, COX5B, COX6A, COX6B, COX6C, COX7A, COX7B, COX7C, COX8 and NDUFA4, which are encoded in the nuclear genome. The complex exists as a monomer or a dimer and forms supercomplexes (SCs) in the inner mitochondrial membrane with NADH-ubiquinone oxidoreductase (complex I, CI) and ubiquinol-cytochrome c oxidoreductase (cytochrome b-c1 complex, complex III, CIII), resulting in different assemblies (supercomplex SCI(1)III(2)IV(1) and megacomplex MCI(2)III(2)IV(2)). Found in a complex with TMEM177, COA6, COX18, COX20, SCO1 and SCO2. Interacts with TMEM177 in a COX20-dependent manner. Interacts with COX20. Interacts with COX16. Cu cation serves as cofactor.

It localises to the mitochondrion inner membrane. It carries out the reaction 4 Fe(II)-[cytochrome c] + O2 + 8 H(+)(in) = 4 Fe(III)-[cytochrome c] + 2 H2O + 4 H(+)(out). Component of the cytochrome c oxidase, the last enzyme in the mitochondrial electron transport chain which drives oxidative phosphorylation. The respiratory chain contains 3 multisubunit complexes succinate dehydrogenase (complex II, CII), ubiquinol-cytochrome c oxidoreductase (cytochrome b-c1 complex, complex III, CIII) and cytochrome c oxidase (complex IV, CIV), that cooperate to transfer electrons derived from NADH and succinate to molecular oxygen, creating an electrochemical gradient over the inner membrane that drives transmembrane transport and the ATP synthase. Cytochrome c oxidase is the component of the respiratory chain that catalyzes the reduction of oxygen to water. Electrons originating from reduced cytochrome c in the intermembrane space (IMS) are transferred via the dinuclear copper A center (CU(A)) of subunit 2 and heme A of subunit 1 to the active site in subunit 1, a binuclear center (BNC) formed by heme A3 and copper B (CU(B)). The BNC reduces molecular oxygen to 2 water molecules using 4 electrons from cytochrome c in the IMS and 4 protons from the mitochondrial matrix. The sequence is that of Cytochrome c oxidase subunit 2 (MT-CO2) from Rusa unicolor (Sambar).